The sequence spans 184 residues: Coordinator of PRMT5 and differentiation stimulator (184 aa).

Met-1 carries the post-translational modification N-acetylmethionine. The span at 1–14 (MDLQAAGAQAQGAA) shows a compositional bias: low complexity. Residues 1–136 (MDLQAAGAQA…PYDADDIQES (136 aa)) form a disordered region. Positions 42 to 56 (SSQERETEKAMDRLA) are enriched in basic and acidic residues. A phosphoserine mark is found at Ser-66 and Ser-75. The span at 78-89 (EGFAMDEEDSDG) shows a compositional bias: acidic residues.

As to quaternary structure, interacts with PRMT5. Interacts with histone H4; specifically interacts with the N-terminus of histone H4 but not with histone H3. Interacts with CBFB. Found in a complex with PRMT5, RUNX1 and CBFB.

The protein resides in the nucleus. In terms of biological role, histone-binding protein required for histone H4 methyltransferase activity of PRMT5. Specifically required for histone H4 'Arg-3' methylation mediated by PRMT5, but not histone H3 'Arg-8' methylation, suggesting that it modulates the substrate specificity of PRMT5. Specifically interacts with the N-terminus of histone H4 but not with histone H3, suggesting that it acts by promoting the association between histone H4 and PRMT5. Involved in CCNE1 promoter repression. Plays a role in muscle cell differentiation by modulating the recruitment of PRMT5 to the promoter of genes involved in the coordination between cell cycle exit and muscle differentiation. The chain is Coordinator of PRMT5 and differentiation stimulator (COPRS) from Homo sapiens (Human).